The primary structure comprises 234 residues: MLTYETWEENDISFSEEDETKGALSVLSWAYKEYENEIVYACSFGVEGMVLLHLINQVNPSAKVVFLDTNVHFQETYELIQKVRERFPSLNIIEKQPKLTLDEQAKLHGNKLWESNPNLCCKIRKILPLEESLANEKAWISGLRREQSETRKHTKFINQDHRFQSIKVCPLIHWTWKEVWRYVYKHSLPYNPLHDIGYPSIGCEKCTLPVGEGGDSRDGRWAGKVKTECGLHYQ.

[4Fe-4S] cluster-binding residues include Cys-120, Cys-121, Cys-203, and Cys-206. The active-site Nucleophile; cysteine thiosulfonate intermediate is the Cys-229.

It belongs to the PAPS reductase family. CysH subfamily. [4Fe-4S] cluster is required as a cofactor.

Its subcellular location is the cytoplasm. It catalyses the reaction [thioredoxin]-disulfide + sulfite + AMP + 2 H(+) = adenosine 5'-phosphosulfate + [thioredoxin]-dithiol. It participates in sulfur metabolism; hydrogen sulfide biosynthesis; sulfite from sulfate. Functionally, catalyzes the formation of sulfite from adenosine 5'-phosphosulfate (APS) using thioredoxin as an electron donor. The chain is Adenosine 5'-phosphosulfate reductase from Bacillus thuringiensis subsp. konkukian (strain 97-27).